Reading from the N-terminus, the 138-residue chain is Histone H2B.3 (138 aa).

Basic and acidic residues-rich tracts occupy residues 1–18 (MAPK…EKTT) and 26–38 (EKRP…GGDK). Positions 1 to 46 (MAPKAEKKPVAEKAEKTTAAKKTKAEKRPPASKEGGDKKGKKKSKK) are disordered. Residues lysine 7 and lysine 27 each carry the N6-acetyllysine modification. Residue lysine 134 forms a Glycyl lysine isopeptide (Lys-Gly) (interchain with G-Cter in ubiquitin) linkage.

Belongs to the histone H2B family. As to quaternary structure, the nucleosome is a histone octamer containing two molecules each of H2A, H2B, H3 and H4 assembled in one H3-H4 heterotetramer and two H2A-H2B heterodimers. The octamer wraps approximately 147 bp of DNA. In terms of processing, can be acetylated to form H2BK6ac and H2BK33ac. Monoubiquitinated to form H2BK143ub1; may give a specific tag for epigenetic transcriptional activation.

Its subcellular location is the nucleus. It localises to the chromosome. Core component of nucleosome. Nucleosomes wrap and compact DNA into chromatin, limiting DNA accessibility to the cellular machineries which require DNA as a template. Histones thereby play a central role in transcription regulation, DNA repair, DNA replication and chromosomal stability. DNA accessibility is regulated via a complex set of post-translational modifications of histones, also called histone code, and nucleosome remodeling. The sequence is that of Histone H2B.3 from Triticum aestivum (Wheat).